Consider the following 376-residue polypeptide: 3-dehydroquinate synthase (376 aa).

NAD(+) is bound by residues 115–119, 139–140, Lys-152, and Lys-161; these read GVIGD and TS. The Zn(2+) site is built by Glu-194, His-256, and His-275.

The protein belongs to the sugar phosphate cyclases superfamily. Dehydroquinate synthase family. Co(2+) serves as cofactor. It depends on Zn(2+) as a cofactor. NAD(+) is required as a cofactor.

It localises to the cytoplasm. The enzyme catalyses 7-phospho-2-dehydro-3-deoxy-D-arabino-heptonate = 3-dehydroquinate + phosphate. It functions in the pathway metabolic intermediate biosynthesis; chorismate biosynthesis; chorismate from D-erythrose 4-phosphate and phosphoenolpyruvate: step 2/7. Functionally, catalyzes the conversion of 3-deoxy-D-arabino-heptulosonate 7-phosphate (DAHP) to dehydroquinate (DHQ). In Rhizobium leguminosarum bv. trifolii (strain WSM2304), this protein is 3-dehydroquinate synthase.